Consider the following 729-residue polypeptide: MPCLLPSLLRATRAALPLLSPPRVVAASASQRLLSAPAQPAASRSSMDSAEELLAPLRLAVRQQGDFVRKLKEDKAPQVDVDRAVAELKARKRVLEAKELALQPKDDIVDRAKMEDTLKRRFFYDQAFAIYGGVSGLYDFGPVGCALKNNIIQAWRQHFIQEEQILEIDCTMLTPEPVLKTSGHVDKFADFMVKDVKNGECFRADHLLKAHLQKLMSDKKCSAEKKSEMESVLAQLDNYGQQELADLFVNYNVKSPTTGNDLSPPVPFNLMFQTFIGPGGNMPGYLRPETAQGIFLNFKRLLEFNQGKLPFAAAQIGNSFRNEISPRSGLIRVREFTMAEIEHFVDPTEKDHPKFQSVADLCLYLYSAKAQVTGQSARKMRLGDAVEQGVINNSVLGYFIGRIYLYLTKVGISPDKLRFRQHMENEMAHYACDCWDAESKTSYGWIEIVGCADRSCYDLSCHARATKVPLVAEKPLKEPKTVNVVQFEPNKGAVGKAYKKDAKLVLEYLSACDECYISEMELLLSEKGEFTIETEGKTFQLTKDMVSVKRFQKTLHVEEVVPSVIEPSFGLGRIMYTILEHTFHVREGDEQRTFFSFPAVVAPFKCSVLPLSQNQEFMPFVKELSEALTRNGVSHKVDDSSGSIGRRYARTDEIGVAFGITIDFDTVNKTPHTATLRDRDSMRQIRAEVSELPNVVRDLANGNITWADVEARYPLFEGQETGKKETVEE.

Residues methionine 1–leucine 33 constitute a mitochondrion transit peptide. The 57-residue stretch at leucine 53–valine 109 folds into the WHEP-TRS domain. Lysine 194 bears the N6-acetyllysine mark. Residue glutamate 289 participates in glycine binding. ATP-binding positions include arginine 321–glutamate 323 and arginine 332–valine 333. Glutamate 340 provides a ligand contact to glycine. At tyrosine 443 the chain carries Phosphotyrosine. Residue glutamate 447 to isoleucine 448 participates in ATP binding. Lysine 491 carries the post-translational modification N6-acetyllysine. Glutamate 566 to serine 568 is a glycine binding site. Arginine 573 provides a ligand contact to ATP. Serine 690 is modified (phosphoserine). Position 726 is a phosphothreonine (threonine 726).

This sequence belongs to the class-II aminoacyl-tRNA synthetase family. Homodimer.

Its subcellular location is the cytoplasm. It localises to the mitochondrion. The protein localises to the cell projection. The protein resides in the axon. It is found in the secreted. Its subcellular location is the extracellular exosome. It carries out the reaction tRNA(Gly) + glycine + ATP = glycyl-tRNA(Gly) + AMP + diphosphate. The enzyme catalyses 2 ATP + H(+) = P(1),P(4)-bis(5'-adenosyl) tetraphosphate + diphosphate. Its function is as follows. Catalyzes the ATP-dependent ligation of glycine to the 3'-end of its cognate tRNA, via the formation of an aminoacyl-adenylate intermediate (Gly-AMP). Also produces diadenosine tetraphosphate (Ap4A), a universal pleiotropic signaling molecule needed for cell regulation pathways, by direct condensation of 2 ATPs. Thereby, may play a special role in Ap4A homeostasis. The polypeptide is Glycine--tRNA ligase (Gars1) (Mus musculus (Mouse)).